A 457-amino-acid polypeptide reads, in one-letter code: UDP-glycosyltransferase 74C1 (457 aa).

Residues Thr281, 336–338 (VPQ), 353–361 (HCGWNSTLE), and 375–378 (WTDQ) each bind UDP-alpha-D-glucose.

Belongs to the UDP-glycosyltransferase family.

This Arabidopsis thaliana (Mouse-ear cress) protein is UDP-glycosyltransferase 74C1 (UGT74C1).